The chain runs to 446 residues: MERLASFGNDPFDKPPCRGCSSYLTEPYVKCAECGPPPFLLCLQCFTRGFEYKKHQSDHTYEIMTSDFPVLDPNWTAQEEMALLEAVMDCGFGNWQDVANQMCTKSKEECEKHYMKHFINNPLFASTLLNLKQAEEAQHNETAIPFHPADDPPRPTFDSLLSRDMAGYMPARARLSSRSFDNYAEWDLRDIDFVEDDSDILHALKIAVVDIYHSRFKREKTAGRKKIIRDHGLINLRKFQILERRYPKEVQDLYETMRRFARILGPVEHDKFIESHALEFELRREIKRLQEYRAAGITNFCSARTYDHLKKTRDEERLKRTMLSEVLQYIQDSSACQQWLSRQADIDSGPTPAAPIPSNSGRRSAPPLNLTGLPGTEKLNEKEKELCQMVRLVPGAYLEYKAALVNECNKQGGLRLAQARALIKIDVNKTRKIYDFLIREGYITKA.

The ZZ-type zinc-finger motif lies at 12–69; the sequence is FDKPPCRGCSSYLTEPYVKCAECGPPPFLLCLQCFTRGFEYKKHQSDHTYEIMTSDFP. Residues C17, C20, C31, C34, C42, C45, H55, and H59 each coordinate Zn(2+). The SANT domain occupies 70–122; it reads VLDPNWTAQEEMALLEAVMDCGFGNWQDVANQMCTKSKEECEKHYMKHFINNP. Residues 345–375 are disordered; sequence DIDSGPTPAAPIPSNSGRRSAPPLNLTGLPG. One can recognise an SWIRM domain in the interval 359–446; that stretch reads NSGRRSAPPL…LIREGYITKA (88 aa). A DNA-binding region spans residues 429-438; it reads KTRKIYDFLI.

It localises to the nucleus. The protein resides in the chromosome. In terms of biological role, component of some complex with histone acetyltransferase activity. Required for the function of some acidic activation domains, which activate transcription from a distant site. Binds double-stranded DNA. Binds dinucleosomes, probably at the linker region between neighboring nucleosomes. Plays a role in chromatin remodeling. This is Transcriptional adapter 2-alpha (TADA2A) from Gallus gallus (Chicken).